Reading from the N-terminus, the 335-residue chain is Peroxidase 2 (335 aa).

The first 29 residues, 1 to 29 (MAAATAPKTMPSSVFAAALLLLAAAACQA), serve as a signal peptide directing secretion. 4 cysteine pairs are disulfide-bonded: C44–C125, C77–C82, C131–C329, and C212–C238. H75 functions as the Proton acceptor in the catalytic mechanism. Positions 76, 79, 81, 83, and 85 each coordinate Ca(2+). 2 N-linked (GlcNAc...) asparagine glycosylation sites follow: N166 and N180. A heme b-binding site is contributed by H205. Residue T206 participates in Ca(2+) binding. N-linked (GlcNAc...) asparagine glycosylation is present at N241. 3 residues coordinate Ca(2+): D253, T256, and D261.

This sequence belongs to the peroxidase family. Classical plant (class III) peroxidase subfamily. Heme b serves as cofactor. The cofactor is Ca(2+). Expressed in the elongating region of young roots, and in root vascular tissues and epidermis.

It is found in the secreted. It catalyses the reaction 2 a phenolic donor + H2O2 = 2 a phenolic radical donor + 2 H2O. Removal of H(2)O(2), oxidation of toxic reductants, biosynthesis and degradation of lignin, suberization, auxin catabolism, response to environmental stresses such as wounding, pathogen attack and oxidative stress. These functions might be dependent on each isozyme/isoform in each plant tissue. This Zea mays (Maize) protein is Peroxidase 2 (PER2).